Here is a 72-residue protein sequence, read N- to C-terminus: Small ribosomal subunit protein eS31 (72 aa).

The Zn(2+) site is built by Cys-32, Cys-35, Cys-51, and Cys-54. The C4-type zinc-finger motif lies at 32-54 (CPRCGSVMAYHKEPVPRWHCGKC).

This sequence belongs to the eukaryotic ribosomal protein eS31 family. Part of the 30S ribosomal subunit. It depends on Zn(2+) as a cofactor.

The polypeptide is Small ribosomal subunit protein eS31 (Caldivirga maquilingensis (strain ATCC 700844 / DSM 13496 / JCM 10307 / IC-167)).